The primary structure comprises 74 residues: uncharacterized protein (74 aa).

The stretch at 29-63 forms a coiled coil; the sequence is LNSKKSALQKDKELQQQAKAQESALAGEELRRRAL.

This is an uncharacterized protein from Pseudoalteromonas phage PM2 (Bacteriophage PM2).